The following is a 395-amino-acid chain: Probable sugar efflux transporter (395 aa).

Helical transmembrane passes span V13–L33, V48–L68, I82–L102, I107–L127, A134–L154, F168–V188, P207–Y227, F244–S264, A272–L292, W297–M317, V331–G351, and I363–V383.

It belongs to the major facilitator superfamily. SotB (TC 2.A.1.2) family.

Its subcellular location is the cell inner membrane. Its function is as follows. Involved in the efflux of sugars. The physiological role may be the reduction of the intracellular concentration of toxic sugars or sugar metabolites. The chain is Probable sugar efflux transporter from Pectobacterium atrosepticum (strain SCRI 1043 / ATCC BAA-672) (Erwinia carotovora subsp. atroseptica).